We begin with the raw amino-acid sequence, 382 residues long: Sialidase (382 aa).

Arg-37 is a binding site for substrate. The Proton acceptor role is filled by Asp-62. BNR repeat units lie at residues Ala-71–Tyr-82, Ile-140–Asn-151, and Ile-208–Met-219. Arg-245 provides a ligand contact to substrate. The stretch at Tyr-255–Ile-266 is one BNR 4 repeat. The Nucleophile role is filled by Tyr-347.

Belongs to the glycosyl hydrolase 33 family.

It localises to the secreted. The catalysed reaction is Hydrolysis of alpha-(2-&gt;3)-, alpha-(2-&gt;6)-, alpha-(2-&gt;8)- glycosidic linkages of terminal sialic acid residues in oligosaccharides, glycoproteins, glycolipids, colominic acid and synthetic substrates.. In terms of biological role, sialidases have been suggested to be pathogenic factors in microbial infections. The protein is Sialidase (nanH) of Clostridium perfringens.